Consider the following 235-residue polypeptide: Pyridoxine 5'-phosphate synthase (235 aa).

Position 6 (Asn6) interacts with 3-amino-2-oxopropyl phosphate. 8-9 (DH) contacts 1-deoxy-D-xylulose 5-phosphate. A 3-amino-2-oxopropyl phosphate-binding site is contributed by Arg17. His42 serves as the catalytic Proton acceptor. Arg44 and His49 together coordinate 1-deoxy-D-xylulose 5-phosphate. Catalysis depends on Glu69, which acts as the Proton acceptor. Thr99 provides a ligand contact to 1-deoxy-D-xylulose 5-phosphate. The Proton donor role is filled by His189. Residues Gly190 and 211-212 (GH) contribute to the 3-amino-2-oxopropyl phosphate site.

Belongs to the PNP synthase family. In terms of assembly, homooctamer; tetramer of dimers.

It is found in the cytoplasm. The catalysed reaction is 3-amino-2-oxopropyl phosphate + 1-deoxy-D-xylulose 5-phosphate = pyridoxine 5'-phosphate + phosphate + 2 H2O + H(+). It participates in cofactor biosynthesis; pyridoxine 5'-phosphate biosynthesis; pyridoxine 5'-phosphate from D-erythrose 4-phosphate: step 5/5. In terms of biological role, catalyzes the complicated ring closure reaction between the two acyclic compounds 1-deoxy-D-xylulose-5-phosphate (DXP) and 3-amino-2-oxopropyl phosphate (1-amino-acetone-3-phosphate or AAP) to form pyridoxine 5'-phosphate (PNP) and inorganic phosphate. The chain is Pyridoxine 5'-phosphate synthase from Chlorobium luteolum (strain DSM 273 / BCRC 81028 / 2530) (Pelodictyon luteolum).